The primary structure comprises 557 residues: 2-succinyl-5-enolpyruvyl-6-hydroxy-3-cyclohexene-1-carboxylate synthase (557 aa).

It belongs to the TPP enzyme family. MenD subfamily. As to quaternary structure, homodimer. It depends on Mg(2+) as a cofactor. Requires Mn(2+) as cofactor. Thiamine diphosphate serves as cofactor.

The enzyme catalyses isochorismate + 2-oxoglutarate + H(+) = 5-enolpyruvoyl-6-hydroxy-2-succinyl-cyclohex-3-ene-1-carboxylate + CO2. It participates in quinol/quinone metabolism; 1,4-dihydroxy-2-naphthoate biosynthesis; 1,4-dihydroxy-2-naphthoate from chorismate: step 2/7. Its pathway is quinol/quinone metabolism; menaquinone biosynthesis. In terms of biological role, catalyzes the thiamine diphosphate-dependent decarboxylation of 2-oxoglutarate and the subsequent addition of the resulting succinic semialdehyde-thiamine pyrophosphate anion to isochorismate to yield 2-succinyl-5-enolpyruvyl-6-hydroxy-3-cyclohexene-1-carboxylate (SEPHCHC). In Staphylococcus aureus (strain MSSA476), this protein is 2-succinyl-5-enolpyruvyl-6-hydroxy-3-cyclohexene-1-carboxylate synthase.